The primary structure comprises 237 residues: Mitochondrial carrier-like protein L276 (237 aa).

Solcar repeat units follow at residues 1-83 (MAKY…FENK), 85-161 (YPYT…LNEY), and 164-233 (KPVV…LNKK). Transmembrane regions (helical) follow at residues 11–27 (AIAT…ICTF), 60–76 (VPAI…KYFL), 91–108 (MING…THPI), 140–160 (SFGK…TLNE), and 166–183 (VVSS…MQPL). The Substrate recognition motif lies at 191-196 (IYGLSL). A helical membrane pass occupies residues 205 to 226 (YYRGLSLNLMRIVPHFVITMTT).

Belongs to the mitochondrial carrier (TC 2.A.29) family.

Its subcellular location is the host mitochondrion inner membrane. Functionally, transports dATP and to a lesser extent dTTP, TTP, UTP and ADP, possibly across the mitochondrial inner membrane. The protein is Mitochondrial carrier-like protein L276 of Acanthamoeba polyphaga (Amoeba).